Reading from the N-terminus, the 383-residue chain is 2-methylcitrate synthase 2 (383 aa).

Residues Arg73 and His195 each coordinate substrate. The active site involves His230. Residue 263 to 267 (VVMGF) participates in CoA binding. Residue His269 is part of the active site. A substrate-binding site is contributed by Arg278. The active site involves Asp320. Positions 345 and 364 each coordinate substrate.

Belongs to the citrate synthase family. As to quaternary structure, homodimer.

The catalysed reaction is propanoyl-CoA + oxaloacetate + H2O = (2S,3S)-2-methylcitrate + CoA + H(+). It carries out the reaction oxaloacetate + acetyl-CoA + H2O = citrate + CoA + H(+). Its pathway is organic acid metabolism; propanoate degradation. It participates in carbohydrate metabolism; tricarboxylic acid cycle; isocitrate from oxaloacetate: step 1/2. In terms of biological role, involved in the catabolism of short chain fatty acids (SCFA) via the tricarboxylic acid (TCA)(acetyl degradation route) and via the 2-methylcitrate cycle I (propionate degradation route). Catalyzes the Claisen condensation of propionyl-CoA and oxaloacetate (OAA) to yield 2-methylcitrate (2-MC) and CoA. Also catalyzes the condensation of oxaloacetate with acetyl-CoA but with a lower specificity. The chain is 2-methylcitrate synthase 2 (prpC2) from Corynebacterium glutamicum (strain ATCC 13032 / DSM 20300 / JCM 1318 / BCRC 11384 / CCUG 27702 / LMG 3730 / NBRC 12168 / NCIMB 10025 / NRRL B-2784 / 534).